The primary structure comprises 178 residues: Large ribosomal subunit protein uL6 (178 aa).

Belongs to the universal ribosomal protein uL6 family. In terms of assembly, part of the 50S ribosomal subunit.

In terms of biological role, this protein binds to the 23S rRNA, and is important in its secondary structure. It is located near the subunit interface in the base of the L7/L12 stalk, and near the tRNA binding site of the peptidyltransferase center. The chain is Large ribosomal subunit protein uL6 from Geobacillus kaustophilus (strain HTA426).